Here is a 379-residue protein sequence, read N- to C-terminus: Gonadotropin-releasing hormone II receptor (379 aa).

Residues 1-45 (MSGNTTLLLSNPTNVLDNSSVLNVSVSPPVLKWETPTFTTAARFR) are Extracellular-facing. N-linked (GlcNAc...) asparagine glycosylation is found at Asn4, Asn18, and Asn23. A helical transmembrane segment spans residues 46 to 65 (VAATLVLFVFAAASNLSVLL). Residues 66–80 (SVTRGRGRRLASHLR) lie on the Cytoplasmic side of the membrane. The helical transmembrane segment at 81-100 (PLIASLASADLVMTFVVMPL) threads the bilayer. At 101-118 (DAVWNVTVQWYAGDAMCK) the chain is on the extracellular side. A glycan (N-linked (GlcNAc...) asparagine) is linked at Asn105. An intrachain disulfide couples Cys117 to Cys194. A helical transmembrane segment spans residues 119–140 (LMCFLKLFAMHSAAFILVVVSL). Residues 141-167 (DRHHAILHPLDTLDAGRRNRRMLLTAW) lie on the Cytoplasmic side of the membrane. Residues 168-184 (ILSLLLASPQLFIFRAI) form a helical membrane-spanning segment. Topologically, residues 185–210 (KAKGVDFVQCATHGSFQQHWQETAYN) are extracellular. Residues 211 to 230 (MFHFVTLYVFPLLVMSLCYT) form a helical membrane-spanning segment. Over 231-283 (RILVEINRQMHRSKDKAGEPCLRRSGTDMIPKARMKTLKMTIIIVASFVICWT) the chain is Cytoplasmic. A helical membrane pass occupies residues 284-302 (PYYLLGIWYWFQPQMLHVI). At 303–308 (PDYVHH) the chain is on the extracellular side. A helical membrane pass occupies residues 309–328 (VFFVFGNLNTCCDPVIYGFF). The Cytoplasmic portion of the chain corresponds to 329 to 379 (TPSFRADLSRCFCWRNQNASAKSLPHFSGHRREVSGEAESDLGSGDQPSGQ). Positions 355–379 (FSGHRREVSGEAESDLGSGDQPSGQ) are disordered.

The protein belongs to the G-protein coupled receptor 1 family. Phosphorylated on the C-terminal cytoplasmic tail.

It is found in the cell membrane. Functionally, receptor for gonadotropin releasing hormone II (GnRH II). This receptor mediates its action by association with G proteins that activate a phosphatidylinositol-calcium second messenger system. The sequence is that of Gonadotropin-releasing hormone II receptor from Clarias gariepinus (North African catfish).